A 354-amino-acid polypeptide reads, in one-letter code: Alanine racemase (354 aa).

Catalysis depends on Lys-33, which acts as the Proton acceptor; specific for D-alanine. Position 33 is an N6-(pyridoxal phosphate)lysine (Lys-33). Arg-127 provides a ligand contact to substrate. Residue Tyr-251 is the Proton acceptor; specific for L-alanine of the active site. Met-299 is a substrate binding site.

It belongs to the alanine racemase family. The cofactor is pyridoxal 5'-phosphate.

It carries out the reaction L-alanine = D-alanine. It functions in the pathway amino-acid biosynthesis; D-alanine biosynthesis; D-alanine from L-alanine: step 1/1. Functionally, catalyzes the interconversion of L-alanine and D-alanine. May also act on other amino acids. The protein is Alanine racemase (alr) of Fusobacterium nucleatum subsp. nucleatum (strain ATCC 25586 / DSM 15643 / BCRC 10681 / CIP 101130 / JCM 8532 / KCTC 2640 / LMG 13131 / VPI 4355).